We begin with the raw amino-acid sequence, 579 residues long: Putative ABC transporter ATP-binding protein VPA1482 (579 aa).

2 consecutive ABC transporter domains span residues 3–244 (IEFS…GIRE) and 299–533 (LEVR…ANLT). Residues 37 to 44 (GPSGSGKS) and 332 to 339 (GKNGSGKS) each bind ATP.

This sequence belongs to the ABC transporter superfamily.

The protein localises to the cell inner membrane. Functionally, probably part of an ABC transporter complex. Responsible for energy coupling to the transport system. The polypeptide is Putative ABC transporter ATP-binding protein VPA1482 (Vibrio parahaemolyticus serotype O3:K6 (strain RIMD 2210633)).